The chain runs to 100 residues: MNLSPREKDKLLVSMAAMVARRRLERGVKLNHPEAIALISDFIVEGARDGRSVAELMQAGAEVLTRAQCMDGIAEMIHDIQVEATFPDGTKLVTVHQPIR.

It belongs to the urease gamma subunit family. Heterotrimer of UreA (gamma), UreB (beta) and UreC (alpha) subunits. Three heterotrimers associate to form the active enzyme.

The protein localises to the cytoplasm. The enzyme catalyses urea + 2 H2O + H(+) = hydrogencarbonate + 2 NH4(+). Its pathway is nitrogen metabolism; urea degradation; CO(2) and NH(3) from urea (urease route): step 1/1. The sequence is that of Urease subunit gamma from Rhodopseudomonas palustris (strain BisA53).